A 488-amino-acid chain; its full sequence is 3-octaprenyl-4-hydroxybenzoate carboxy-lyase (488 aa).

N172 contributes to the Mn(2+) binding site. Prenylated FMN contacts are provided by residues 175–177, 189–191, and 194–195; these read IYR, RWL, and RG. Residue E238 coordinates Mn(2+). The active-site Proton donor is the D287.

This sequence belongs to the UbiD family. Homohexamer. The cofactor is prenylated FMN. It depends on Mn(2+) as a cofactor.

Its subcellular location is the cell membrane. The catalysed reaction is a 4-hydroxy-3-(all-trans-polyprenyl)benzoate + H(+) = a 2-(all-trans-polyprenyl)phenol + CO2. It functions in the pathway cofactor biosynthesis; ubiquinone biosynthesis. Functionally, catalyzes the decarboxylation of 3-octaprenyl-4-hydroxy benzoate to 2-octaprenylphenol, an intermediate step in ubiquinone biosynthesis. This is 3-octaprenyl-4-hydroxybenzoate carboxy-lyase from Pseudomonas putida (strain GB-1).